Consider the following 812-residue polypeptide: Probable inorganic carbon transporter subunit DabA (812 aa).

Zn(2+) is bound by residues cysteine 337, aspartate 339, histidine 499, and cysteine 514.

It belongs to the inorganic carbon transporter (TC 9.A.2) DabA family. As to quaternary structure, forms a complex with DabB. The cofactor is Zn(2+).

Its subcellular location is the cell inner membrane. Its function is as follows. Part of an energy-coupled inorganic carbon pump. The polypeptide is Probable inorganic carbon transporter subunit DabA (Xanthomonas euvesicatoria pv. vesicatoria (strain 85-10) (Xanthomonas campestris pv. vesicatoria)).